The sequence spans 293 residues: Elongation factor Ts (293 aa).

An involved in Mg(2+) ion dislocation from EF-Tu region spans residues 79-82 (TDFV).

The protein belongs to the EF-Ts family.

The protein resides in the cytoplasm. Associates with the EF-Tu.GDP complex and induces the exchange of GDP to GTP. It remains bound to the aminoacyl-tRNA.EF-Tu.GTP complex up to the GTP hydrolysis stage on the ribosome. In Macrococcus caseolyticus (strain JCSC5402) (Macrococcoides caseolyticum), this protein is Elongation factor Ts.